The primary structure comprises 88 residues: Small ribosomal subunit protein bS20 (88 aa).

The protein belongs to the bacterial ribosomal protein bS20 family.

In terms of biological role, binds directly to 16S ribosomal RNA. This chain is Small ribosomal subunit protein bS20, found in Clostridium novyi (strain NT).